A 139-amino-acid polypeptide reads, in one-letter code: Actin-depolymerizing factor (139 aa).

The ADF-H domain occupies 5-139; that stretch reads SSGMAVDDEC…SMDIIKARAF (135 aa).

This sequence belongs to the actin-binding proteins ADF family. As to expression, preferentially in mature anther.

In terms of biological role, actin-depolymerizing protein. Severs actin filaments (F-actin) and binds to actin monomers. This Lilium longiflorum (Trumpet lily) protein is Actin-depolymerizing factor.